We begin with the raw amino-acid sequence, 632 residues long: Epithelial sodium channel subunit alpha (632 aa).

The Cytoplasmic segment spans residues 1–49 (MTKEEKNEKEALIEFFSSYRELFEFFCSNTTIHGAIRLVCSRRNRMKTA). A helical membrane pass occupies residues 50–70 (FWLVLFLVTFGLMYWQFGLLF). Residues 71-520 (GQYFSYPVSI…SQWSLWFGSS (450 aa)) lie on the Extracellular side of the membrane. 10 cysteine pairs are disulfide-bonded: Cys-97-Cys-264, Cys-189-Cys-196, Cys-241-Cys-248, Cys-355-Cys-440, Cys-377-Cys-417, Cys-377-Cys-436, Cys-381-Cys-432, Cys-390-Cys-417, Cys-390-Cys-440, and Cys-392-Cys-406. A helical membrane pass occupies residues 521–541 (VLSVVEMLELVIDFVIIGVMI). Residues 542 to 632 (LLHRYYYKKA…YYEENGGRRN (91 aa)) are Cytoplasmic-facing. The segment covering 612–622 (SRSSSMRSNRS) has biased composition (low complexity). The segment at 612–632 (SRSSSMRSNRSYYEENGGRRN) is disordered. The span at 623–632 (YYEENGGRRN) shows a compositional bias: basic and acidic residues.

Belongs to the amiloride-sensitive sodium channel (TC 1.A.6) family. SCNN1A subfamily. As to quaternary structure, heterotrimer; containing an alpha/SCNN1A, a beta/SCNN1B and a gamma/SCNN1G subunit. Interacts with shroom1.

It is found in the apical cell membrane. The protein localises to the cell projection. It localises to the cilium. Its subcellular location is the cytoplasmic granule. The protein resides in the cytoplasm. It is found in the cytoplasmic vesicle. The protein localises to the secretory vesicle. It localises to the acrosome. Its subcellular location is the flagellum. It carries out the reaction Na(+)(in) = Na(+)(out). With respect to regulation, originally identified and characterized by its inhibition by the diuretic drug amiloride. Functionally, this is one of the three pore-forming subunits of the heterotrimeric epithelial sodium channel (ENaC), a critical regulator of sodium balance and fluid homeostasis. ENaC operates in epithelial tissues, where it mediates the electrodiffusion of sodium ions from extracellular fluid through the apical membrane of cells, with water following osmotically. It plays a key role in maintaining sodium homeostasis through electrogenic sodium reabsorption in the kidneys. The sequence is that of Epithelial sodium channel subunit alpha from Xenopus laevis (African clawed frog).